Consider the following 2279-residue polypeptide: Zinc finger protein 318 (2279 aa).

2 stretches are compositionally biased toward low complexity: residues 1–12 (MYRSSARSSVSS) and 25–39 (SGRSSGSSSGPARRS). Disordered regions lie at residues 1–140 (MYRS…PGLC) and 164–189 (RRRLSDRLGSPVDNLEDMDRDDLTDD). Residues 1–1092 (MYRSSARSSV…THMHNKKHTQ (1092 aa)) form an interaction with AR region. Ser-40 carries the phosphoserine modification. Positions 53-67 (PARRPRSPSGHRGRR) are enriched in basic residues. Phosphoserine occurs at positions 79 and 81. Residues 110–132 (SRGESRADYARDGRGDHPGDSGS) are compositionally biased toward basic and acidic residues. A phosphoserine mark is found at Ser-136 and Ser-173. The span at 177 to 188 (NLEDMDRDDLTD) shows a compositional bias: acidic residues. Tyr-205 is modified (phosphotyrosine). 2 positions are modified to phosphoserine: Ser-207 and Ser-214. Disordered stretches follow at residues 279 to 346 (TVKI…DGGG) and 397 to 416 (LESFSSSTSSSQDHPLYSGH). Positions 311–333 (LDPEFRELDLARRKREEEEERSR) are enriched in basic and acidic residues. Residues 315–343 (FRELDLARRKREEEEERSRSLSQELVGVD) adopt a coiled-coil conformation. Residues Ser-464, Ser-472, Ser-501, and Ser-527 each carry the phosphoserine modification. 2 disordered regions span residues 514 to 533 (LADSTSTQEKRRRSFPDIED) and 540 to 570 (GDEEEDLKAESVPKPLGSSESEVMRQKASSL). Glycyl lysine isopeptide (Lys-Gly) (interchain with G-Cter in SUMO2) cross-links involve residues Lys-547, Lys-553, Lys-566, and Lys-578. The span at 664-683 (FSADRRSSDPHRLESREAHH) shows a compositional bias: basic and acidic residues. The tract at residues 664-709 (FSADRRSSDPHRLESREAHHSNTHSPEVSHPHPPSPVDPYLLTKNS) is disordered. Thr-842 is subject to Phosphothreonine. The stretch at 876-980 (EKISDEKNRA…SELDKVAQIL (105 aa)) forms a coiled coil. Composition is skewed to basic and acidic residues over residues 922-941 (QQGEMLRKKRREKDGHKDPL) and 989-1012 (QKSLSDSREPTEKPGKAEKSKSPE). Disordered regions lie at residues 922–942 (QQGEMLRKKRREKDGHKDPLL) and 989–1051 (QKSL…TKQL). Ser-1010 is subject to Phosphoserine. Over residues 1013-1023 (KVSSFSNSSSN) the composition is skewed to low complexity. The segment covering 1024-1034 (KESKVNNEKFR) has biased composition (basic and acidic residues). Ser-1037 carries the post-translational modification Phosphoserine. Matrin-type zinc fingers lie at residues 1063-1097 (AGNHWCKDCNTICGTMFDFFTHMHNKKHTQTLDPY) and 1136-1166 (FYCQLCEEFLGDPISGEQHVKGHQHNEKYKK). Composition is skewed to basic and acidic residues over residues 1195-1235 (RRQS…KLED), 1242-1251 (NSPEKAENKR), 1258-1267 (QLKEEVKKES), 1279-1288 (KKPEKEEEKS), and 1296-1316 (SKEEILESSKDKEDGKTEAGK). The segment at 1195 to 1319 (RRQSELKRKL…GKTEAGKAKP (125 aa)) is disordered. Ser-1243 and Ser-1267 each carry phosphoserine. At Ser-1420 the chain carries Phosphoserine. Disordered stretches follow at residues 1428 to 1463 (AEKSEPSHLPEQILPPPPPPPPPPPPPPPVIPHPAA), 1577 to 1628 (GKGA…EELH), 1702 to 1735 (SSFQSDTSRDISPEKSELDLGEPGPPGVEPPPQL), and 1753 to 1775 (ESVNQDKESQELRKSEDCRESEI). Residues 1440 to 1462 (ILPPPPPPPPPPPPPPPVIPHPA) show a composition bias toward pro residues. A compositionally biased stretch (low complexity) spans 1602 to 1623 (SNLSRTKSSDTSSTSPLNSSAS). The segment covering 1708–1719 (TSRDISPEKSEL) has biased composition (basic and acidic residues). The residue at position 1713 (Ser-1713) is a Phosphoserine. Pro residues predominate over residues 1724–1734 (PGPPGVEPPPQ). A coiled-coil region spans residues 1768 to 1792 (EDCRESEIETNTELKERVKELSEGI). A phosphoserine mark is found at Ser-1856, Ser-1896, Ser-1971, Ser-2030, Ser-2035, Ser-2091, Ser-2101, Ser-2189, Ser-2192, and Ser-2243. Residues 2252 to 2279 (DNMVPQGMPEQETTVGAIQDHTESSVHN) are disordered.

As to quaternary structure, homodimer. Heterodimer of isoform 1 and isoform 2. Isoform 1 and isoform 2 interact with AR. Expressed in endocrine tissue.

It localises to the nucleus. In terms of biological role, acts as a transcriptional corepressor for AR-mediated transactivation function. May act as a transcriptional regulator during spermatogenesis and, in particular, during meiotic division. Acts as a transcriptional coactivator for AR-mediated transactivation function. May act as a transcriptional regulator during spermatogenesis and, in particular, during meiotic division. The polypeptide is Zinc finger protein 318 (ZNF318) (Homo sapiens (Human)).